The chain runs to 310 residues: GTPase Era (310 aa).

The Era-type G domain maps to 17 to 184 (HSGFVALIGA…LDYLAQALPA (168 aa)). Positions 25-32 (GAPNAGKS) are G1. GTP is bound at residue 25-32 (GAPNAGKS). The tract at residues 51 to 55 (QTTRA) is G2. The G3 stretch occupies residues 72-75 (DTPG). Residues 72-76 (DTPGI) and 134-137 (NKVD) each bind GTP. Residues 134–137 (NKVD) are G4. Positions 163-165 (VSA) are G5. The KH type-2 domain occupies 215 to 292 (LHQELPYSSH…HLFLFVKVRE (78 aa)).

Belongs to the TRAFAC class TrmE-Era-EngA-EngB-Septin-like GTPase superfamily. Era GTPase family. Monomer.

Its subcellular location is the cytoplasm. The protein resides in the cell inner membrane. In terms of biological role, an essential GTPase that binds both GDP and GTP, with rapid nucleotide exchange. Plays a role in 16S rRNA processing and 30S ribosomal subunit biogenesis and possibly also in cell cycle regulation and energy metabolism. This Mesorhizobium japonicum (strain LMG 29417 / CECT 9101 / MAFF 303099) (Mesorhizobium loti (strain MAFF 303099)) protein is GTPase Era.